Reading from the N-terminus, the 541-residue chain is Pseudokinase FAM20A (541 aa).

An N-terminal signal peptide occupies residues M1 to R33. The interval R38 to S90 is disordered. A compositionally biased stretch (low complexity) spans R49–D63. N-linked (GlcNAc...) asparagine glycans are attached at residues N70, N145, and N287. Cystine bridges form between C314-C330, C319-C323, C378-C452, and C453-C512. N388 carries an N-linked (GlcNAc...) asparagine glycan. N-linked (GlcNAc...) asparagine glycosylation occurs at N538.

The protein belongs to the FAM20 family. Interacts with FAM20C; probably forming a heterotetramer of 2 subunits of FAM20A and 2 subunits of FAM20C. In terms of processing, N-glycosylated. Highly expressed in lung and liver. Intermediate levels in thymus and ovary.

It is found in the secreted. The protein localises to the golgi apparatus. Its subcellular location is the endoplasmic reticulum. Its function is as follows. Pseudokinase that acts as an allosteric activator of the Golgi serine/threonine protein kinase FAM20C and is involved in biomineralization of teeth. Forms a complex with FAM20C and increases the ability of FAM20C to phosphorylate the proteins that form the 'matrix' that guides the deposition of the enamel minerals. This chain is Pseudokinase FAM20A, found in Homo sapiens (Human).